The chain runs to 295 residues: Phosphatidylserine decarboxylase proenzyme (295 aa).

Residues D101, H158, and S262 each act as charge relay system; for autoendoproteolytic cleavage activity in the active site. The Schiff-base intermediate with substrate; via pyruvic acid; for decarboxylase activity role is filled by S262. Position 262 is a pyruvic acid (Ser); by autocatalysis (S262).

Belongs to the phosphatidylserine decarboxylase family. PSD-B subfamily. Prokaryotic type I sub-subfamily. In terms of assembly, heterodimer of a large membrane-associated beta subunit and a small pyruvoyl-containing alpha subunit. Pyruvate is required as a cofactor. Is synthesized initially as an inactive proenzyme. Formation of the active enzyme involves a self-maturation process in which the active site pyruvoyl group is generated from an internal serine residue via an autocatalytic post-translational modification. Two non-identical subunits are generated from the proenzyme in this reaction, and the pyruvate is formed at the N-terminus of the alpha chain, which is derived from the carboxyl end of the proenzyme. The autoendoproteolytic cleavage occurs by a canonical serine protease mechanism, in which the side chain hydroxyl group of the serine supplies its oxygen atom to form the C-terminus of the beta chain, while the remainder of the serine residue undergoes an oxidative deamination to produce ammonia and the pyruvoyl prosthetic group on the alpha chain. During this reaction, the Ser that is part of the protease active site of the proenzyme becomes the pyruvoyl prosthetic group, which constitutes an essential element of the active site of the mature decarboxylase.

Its subcellular location is the cell membrane. The catalysed reaction is a 1,2-diacyl-sn-glycero-3-phospho-L-serine + H(+) = a 1,2-diacyl-sn-glycero-3-phosphoethanolamine + CO2. Its pathway is phospholipid metabolism; phosphatidylethanolamine biosynthesis; phosphatidylethanolamine from CDP-diacylglycerol: step 2/2. Its function is as follows. Catalyzes the formation of phosphatidylethanolamine (PtdEtn) from phosphatidylserine (PtdSer). This chain is Phosphatidylserine decarboxylase proenzyme, found in Pasteurella multocida (strain Pm70).